A 141-amino-acid chain; its full sequence is Hemoglobin subunit alpha (141 aa).

A Globin domain is found at 1–141; the sequence is VLSSDDKCNV…VSSVLTSKYR (141 aa). Residue His58 coordinates O2. His87 contributes to the heme b binding site.

It belongs to the globin family. Heterotetramer of two alpha chains and two beta chains. Red blood cells.

Involved in oxygen transport from the lung to the various peripheral tissues. Has antimicrobial activity against B.subtilis ATCC 6633. Has antioxidant activity. The protein is Hemoglobin subunit alpha of Crocodylus siamensis (Siamese crocodile).